The primary structure comprises 424 residues: Protein ImpB (424 aa).

One can recognise a UmuC domain in the interval 2–189; sequence FALADINSFY…QPVGEVWGVG (188 aa).

This sequence belongs to the DNA polymerase type-Y family.

In terms of biological role, involved in UV protection and mutation. The sequence is that of Protein ImpB (impB) from Salmonella typhimurium.